A 142-amino-acid chain; its full sequence is UPF0332 protein PH1297 (142 aa).

The protein belongs to the UPF0332 family.

The protein is UPF0332 protein PH1297 of Pyrococcus horikoshii (strain ATCC 700860 / DSM 12428 / JCM 9974 / NBRC 100139 / OT-3).